Reading from the N-terminus, the 401-residue chain is Imidazolonepropionase (401 aa).

The Fe(3+) site is built by His-66 and His-68. His-66 and His-68 together coordinate Zn(2+). Residues Arg-75, Tyr-138, and His-171 each contribute to the 4-imidazolone-5-propanoate site. Tyr-138 is a binding site for N-formimidoyl-L-glutamate. His-236 contributes to the Fe(3+) binding site. His-236 provides a ligand contact to Zn(2+). Residue Gln-239 participates in 4-imidazolone-5-propanoate binding. Asp-311 provides a ligand contact to Fe(3+). Asp-311 contributes to the Zn(2+) binding site. Residues Asn-313 and Gly-315 each contribute to the N-formimidoyl-L-glutamate site. Thr-316 provides a ligand contact to 4-imidazolone-5-propanoate.

It belongs to the metallo-dependent hydrolases superfamily. HutI family. It depends on Zn(2+) as a cofactor. The cofactor is Fe(3+).

It localises to the cytoplasm. The catalysed reaction is 4-imidazolone-5-propanoate + H2O = N-formimidoyl-L-glutamate. It participates in amino-acid degradation; L-histidine degradation into L-glutamate; N-formimidoyl-L-glutamate from L-histidine: step 3/3. In terms of biological role, catalyzes the hydrolytic cleavage of the carbon-nitrogen bond in imidazolone-5-propanoate to yield N-formimidoyl-L-glutamate. It is the third step in the universal histidine degradation pathway. The protein is Imidazolonepropionase of Acinetobacter baumannii (strain AB307-0294).